Reading from the N-terminus, the 469-residue chain is Ubiquitin carboxyl-terminal hydrolase MINDY-1 (469 aa).

A disordered region spans residues 1–85 (MEYHQPEDPA…APPGPTLGTL (85 aa)). The span at 23–53 (ENHEVLAGPDEHPQDTDARDADGEAREREPA) shows a compositional bias: basic and acidic residues. A compositionally biased stretch (low complexity) spans 66–76 (LESPLPEASSA). Ser-103 bears the Phosphoserine mark. Residue Cys-137 is the Nucleophile of the active site. Catalysis depends on His-319, which acts as the Proton acceptor. Residues 388–426 (QVDQDYLIALSLQQQQPRGPLGLTDLELAQQLQQEEYQQ) form a ubiquitin-binding domain (UBD) region. Residue Ser-441 is modified to Phosphoserine. Residues 441-469 (SLQGRGATSGRPAGERRQRPKHESDCILL) form a disordered region. The segment covering 453–469 (AGERRQRPKHESDCILL) has biased composition (basic and acidic residues).

It belongs to the MINDY deubiquitinase family. FAM63 subfamily.

It carries out the reaction Thiol-dependent hydrolysis of ester, thioester, amide, peptide and isopeptide bonds formed by the C-terminal Gly of ubiquitin (a 76-residue protein attached to proteins as an intracellular targeting signal).. Functionally, hydrolase that can specifically remove 'Lys-48'-linked conjugated ubiquitin from proteins. Has exodeubiquitinase activity and has a preference for long polyubiquitin chains. May play a regulatory role at the level of protein turnover. In Homo sapiens (Human), this protein is Ubiquitin carboxyl-terminal hydrolase MINDY-1.